Consider the following 342-residue polypeptide: Hydrogenase expression/formation protein HupV (342 aa).

The protein belongs to the HupK family.

The chain is Hydrogenase expression/formation protein HupV (hupV) from Azotobacter chroococcum mcd 1.